The sequence spans 187 residues: GTPase KRas (187 aa).

GTP contacts are provided by residues 10–18 (GAVGVGKSA), 29–35 (VDEYDPT), 59–60 (AG), and 116–119 (NKCA). An Effector region motif is present at residues 32–40 (YDPTIEDSY). The interval 168–187 (EKMSKDGKKKKKSKTKCSIL) is disordered. At cysteine 184 the chain carries Cysteine methyl ester. Residue cysteine 184 is the site of S-farnesyl cysteine attachment. A propeptide spans 185 to 187 (SIL) (removed in mature form).

Belongs to the small GTPase superfamily. Ras family.

The protein localises to the cell membrane. Its subcellular location is the cytoplasm. It carries out the reaction GTP + H2O = GDP + phosphate + H(+). Its activity is regulated as follows. Alternates between an inactive form bound to GDP and an active form bound to GTP. Activated by a guanine nucleotide-exchange factor (GEF) and inactivated by a GTPase-activating protein (GAP). Ras proteins bind GDP/GTP and possess intrinsic GTPase activity. Plays an important role in the regulation of cell proliferation. In Xenopus laevis (African clawed frog), this protein is GTPase KRas (kras).